The following is a 424-amino-acid chain: Type II methyltransferase M.XorII (424 aa).

The region spanning Pro4 to Lys367 is the SAM-dependent MTase C5-type domain. Cys83 is a catalytic residue. Residues Arg404 to Ala424 form a disordered region. Basic and acidic residues predominate over residues Arg406–Ala424.

The protein belongs to the class I-like SAM-binding methyltransferase superfamily. C5-methyltransferase family.

The enzyme catalyses a 2'-deoxycytidine in DNA + S-adenosyl-L-methionine = a 5-methyl-2'-deoxycytidine in DNA + S-adenosyl-L-homocysteine + H(+). In terms of biological role, a methylase that recognizes the double-stranded sequence 5'-CGATCG-3', methylates C-? on both strands and protects the DNA from cleavage by the XorII endonuclease. The polypeptide is Type II methyltransferase M.XorII (xorIIM) (Xanthomonas oryzae pv. oryzae (strain KACC10331 / KXO85)).